Consider the following 130-residue polypeptide: Methylglyoxal synthase (130 aa).

The region spanning 1-130 is the MGS-like domain; the sequence is MMTRPRIALI…AELSRVEAQP (130 aa). Substrate contacts are provided by residues H12, K16, 38 to 41, and 58 to 59; these read TGTT and SG. D64 (proton donor/acceptor) is an active-site residue. Position 91 (H91) interacts with substrate.

The protein belongs to the methylglyoxal synthase family.

The catalysed reaction is dihydroxyacetone phosphate = methylglyoxal + phosphate. Functionally, catalyzes the formation of methylglyoxal from dihydroxyacetone phosphate. The protein is Methylglyoxal synthase of Cupriavidus pinatubonensis (strain JMP 134 / LMG 1197) (Cupriavidus necator (strain JMP 134)).